The chain runs to 78 residues: DNA-directed RNA polymerase subunit Rpo5 (78 aa).

This sequence belongs to the archaeal Rpo5/eukaryotic RPB5 RNA polymerase subunit family. Part of the RNA polymerase complex.

It is found in the cytoplasm. It catalyses the reaction RNA(n) + a ribonucleoside 5'-triphosphate = RNA(n+1) + diphosphate. Its function is as follows. DNA-dependent RNA polymerase (RNAP) catalyzes the transcription of DNA into RNA using the four ribonucleoside triphosphates as substrates. This is DNA-directed RNA polymerase subunit Rpo5 from Methanococcus vannielii (strain ATCC 35089 / DSM 1224 / JCM 13029 / OCM 148 / SB).